Reading from the N-terminus, the 279-residue chain is Large ribosomal subunit protein uL2 (279 aa).

The interval 222–279 is disordered; it reads GVAMNPVDHPHGGGEGRTSGGRHPVTPAGKPTKGAKTRVNKATDKFIIRSRHKAKKGR. A compositionally biased stretch (basic residues) spans 269–279; that stretch reads IRSRHKAKKGR.

The protein belongs to the universal ribosomal protein uL2 family. As to quaternary structure, part of the 50S ribosomal subunit. Forms a bridge to the 30S subunit in the 70S ribosome.

Functionally, one of the primary rRNA binding proteins. Required for association of the 30S and 50S subunits to form the 70S ribosome, for tRNA binding and peptide bond formation. It has been suggested to have peptidyltransferase activity; this is somewhat controversial. Makes several contacts with the 16S rRNA in the 70S ribosome. The polypeptide is Large ribosomal subunit protein uL2 (Caulobacter vibrioides (strain ATCC 19089 / CIP 103742 / CB 15) (Caulobacter crescentus)).